The following is a 418-amino-acid chain: MTLFKHWQTLYINVNLATMTDGSESYGEISQGALAISAGKIAWLGKESDLPEHFSVTDEDIEVIDCKGQWLTPGLIDCHTHLVYGGNRANEFEMRLQGKSYQEIANAGGGIVSTVTATRRASEQELLASALPRLTALHQQGVTTVEIKSGYGLDTINEIKMLKVAGLLADELPVTIKRTFLGAHALPIEYKDNAEGYLDVVCEEMLPQVVSENLADAVDVFCEGIGFSLAQTKRVFDAAQSHDLPIKVHAEQLSNLGASELAANYNALSSDHIEFLDEAGIKAMKKSGMTAVLLPGAFYFLRETQLPPIELLRKHQVPMAVATDANPGTSPIHNIHLMLNMACTLFRLTPSEALAGITCYGAKALGLSESKGQLAVGYDADIALWNINQPAELCYQFGVNPLSRLIQNGQQVLMNESA.

The Fe(3+) site is built by His79 and His81. Zn(2+) contacts are provided by His79 and His81. The 4-imidazolone-5-propanoate site is built by Arg88, Tyr151, and His184. Residue Tyr151 participates in N-formimidoyl-L-glutamate binding. His249 contacts Fe(3+). His249 is a binding site for Zn(2+). Gln252 contacts 4-imidazolone-5-propanoate. Asp324 serves as a coordination point for Fe(3+). Zn(2+) is bound at residue Asp324. N-formimidoyl-L-glutamate contacts are provided by Asn326 and Gly328. Position 329 (Thr329) interacts with 4-imidazolone-5-propanoate.

The protein belongs to the metallo-dependent hydrolases superfamily. HutI family. It depends on Zn(2+) as a cofactor. Fe(3+) is required as a cofactor.

Its subcellular location is the cytoplasm. It catalyses the reaction 4-imidazolone-5-propanoate + H2O = N-formimidoyl-L-glutamate. It participates in amino-acid degradation; L-histidine degradation into L-glutamate; N-formimidoyl-L-glutamate from L-histidine: step 3/3. Functionally, catalyzes the hydrolytic cleavage of the carbon-nitrogen bond in imidazolone-5-propanoate to yield N-formimidoyl-L-glutamate. It is the third step in the universal histidine degradation pathway. The sequence is that of Imidazolonepropionase from Colwellia psychrerythraea (strain 34H / ATCC BAA-681) (Vibrio psychroerythus).